The following is an 847-amino-acid chain: Phenylalanine--tRNA ligase beta subunit (847 aa).

A tRNA-binding domain is found at Phe-40 to Val-168. The B5 domain occupies Ala-426–Ser-501. 4 residues coordinate Mg(2+): Asp-479, Asp-485, Glu-488, and Glu-489. The 94-residue stretch at Ala-753–Arg-846 folds into the FDX-ACB domain.

The protein belongs to the phenylalanyl-tRNA synthetase beta subunit family. Type 1 subfamily. As to quaternary structure, tetramer of two alpha and two beta subunits. The cofactor is Mg(2+).

Its subcellular location is the cytoplasm. It carries out the reaction tRNA(Phe) + L-phenylalanine + ATP = L-phenylalanyl-tRNA(Phe) + AMP + diphosphate + H(+). The protein is Phenylalanine--tRNA ligase beta subunit of Leifsonia xyli subsp. xyli (strain CTCB07).